The chain runs to 360 residues: Phenylalanine--tRNA ligase alpha subunit (360 aa).

Mg(2+) is bound at residue Glu260.

Belongs to the class-II aminoacyl-tRNA synthetase family. Phe-tRNA synthetase alpha subunit type 1 subfamily. In terms of assembly, tetramer of two alpha and two beta subunits. It depends on Mg(2+) as a cofactor.

It localises to the cytoplasm. The enzyme catalyses tRNA(Phe) + L-phenylalanine + ATP = L-phenylalanyl-tRNA(Phe) + AMP + diphosphate + H(+). This is Phenylalanine--tRNA ligase alpha subunit from Paracoccus denitrificans (strain Pd 1222).